The primary structure comprises 216 residues: Flagellin B3 (216 aa).

Positions 1 to 11 are excised as a propeptide; it reads MLLDYIKSRRG.

The protein belongs to the archaeal flagellin family.

It localises to the archaeal flagellum. Flagellin is the subunit protein which polymerizes to form the filaments of archaeal flagella. This chain is Flagellin B3 (flaB3), found in Methanocaldococcus jannaschii (strain ATCC 43067 / DSM 2661 / JAL-1 / JCM 10045 / NBRC 100440) (Methanococcus jannaschii).